Here is a 346-residue protein sequence, read N- to C-terminus: L-glyceraldehyde 3-phosphate reductase (346 aa).

12 residues coordinate NADP(+): Trp33, Asp61, Tyr66, Ser168, Gln193, Thr223, Leu225, Gln227, Lys233, Ser303, Gln307, and Asn311.

Belongs to the shaker potassium channel beta subunit family.

The enzyme catalyses a primary alcohol + NADP(+) = an aldehyde + NADPH + H(+). Functionally, aldo-keto reductase that catalyzes the stereospecific, NADPH-dependent reduction of L-glyceraldehyde 3-phosphate (L-GAP) to L-glycerol 3-phosphate (L-G3P). The polypeptide is L-glyceraldehyde 3-phosphate reductase (Escherichia coli O157:H7).